Consider the following 70-residue polypeptide: Putative membrane protein insertion efficiency factor (70 aa).

The protein belongs to the UPF0161 family.

Its subcellular location is the cell membrane. Functionally, could be involved in insertion of integral membrane proteins into the membrane. In Rubrobacter xylanophilus (strain DSM 9941 / JCM 11954 / NBRC 16129 / PRD-1), this protein is Putative membrane protein insertion efficiency factor.